The primary structure comprises 284 residues: Diaminopimelate epimerase (284 aa).

Residues Asn-13 and Asn-70 each contribute to the substrate site. Residue Cys-79 is the Proton donor of the active site. Residues 80–81 (GN), Asn-167, Asn-200, and 218–219 (ER) contribute to the substrate site. Cys-227 acts as the Proton acceptor in catalysis. 228–229 (GT) contributes to the substrate binding site.

The protein belongs to the diaminopimelate epimerase family. In terms of assembly, homodimer.

The protein localises to the cytoplasm. It catalyses the reaction (2S,6S)-2,6-diaminopimelate = meso-2,6-diaminopimelate. It functions in the pathway amino-acid biosynthesis; L-lysine biosynthesis via DAP pathway; DL-2,6-diaminopimelate from LL-2,6-diaminopimelate: step 1/1. Functionally, catalyzes the stereoinversion of LL-2,6-diaminopimelate (L,L-DAP) to meso-diaminopimelate (meso-DAP), a precursor of L-lysine and an essential component of the bacterial peptidoglycan. The sequence is that of Diaminopimelate epimerase from Prochlorococcus marinus (strain NATL1A).